A 218-amino-acid chain; its full sequence is Eukaryotic translation initiation factor 3 subunit K (218 aa).

At Ala-2 the chain carries N-acetylalanine. Thr-28 is subject to Phosphothreonine. A PCI domain is found at 42–204; it reads YDLEANLAVL…SIKPKNIVEK (163 aa). Ser-217 bears the Phosphoserine mark.

In terms of assembly, component of the eukaryotic translation initiation factor 3 (eIF-3) complex, which is composed of 13 subunits: EIF3A, EIF3B, EIF3C, EIF3D, EIF3E, EIF3F, EIF3G, EIF3H, EIF3I, EIF3J, EIF3K, EIF3L and EIF3M. The eIF-3 complex appears to include 3 stable modules: module A is composed of EIF3A, EIF3B, EIF3G and EIF3I; module B is composed of EIF3F, EIF3H, and EIF3M; and module C is composed of EIF3C, EIF3D, EIF3E, EIF3K and EIF3L. EIF3C of module C binds EIF3B of module A and EIF3H of module B, thereby linking the three modules. EIF3J is a labile subunit that binds to the eIF-3 complex via EIF3B. The eIF-3 complex interacts with RPS6KB1 under conditions of nutrient depletion. Mitogenic stimulation leads to binding and activation of a complex composed of MTOR and RPTOR, leading to phosphorylation and release of RPS6KB1 and binding of EIF4B to eIF-3. Interacts with CCND3, but not with CCND1 and CCND2. In terms of tissue distribution, ubiquitous, with the highest levels of expression in brain, testis and kidney.

It is found in the nucleus. The protein resides in the cytoplasm. In terms of biological role, component of the eukaryotic translation initiation factor 3 (eIF-3) complex, which is required for several steps in the initiation of protein synthesis. The eIF-3 complex associates with the 40S ribosome and facilitates the recruitment of eIF-1, eIF-1A, eIF-2:GTP:methionyl-tRNAi and eIF-5 to form the 43S pre-initiation complex (43S PIC). The eIF-3 complex stimulates mRNA recruitment to the 43S PIC and scanning of the mRNA for AUG recognition. The eIF-3 complex is also required for disassembly and recycling of post-termination ribosomal complexes and subsequently prevents premature joining of the 40S and 60S ribosomal subunits prior to initiation. The eIF-3 complex specifically targets and initiates translation of a subset of mRNAs involved in cell proliferation, including cell cycling, differentiation and apoptosis, and uses different modes of RNA stem-loop binding to exert either translational activation or repression. The protein is Eukaryotic translation initiation factor 3 subunit K of Homo sapiens (Human).